Reading from the N-terminus, the 368-residue chain is Serine/threonine-protein kinase CAK1 (368 aa).

Residues 1–368 (MKLDSIDITH…QRILQELEKP (368 aa)) form the Protein kinase domain. The Proton acceptor role is filled by D156.

It belongs to the protein kinase superfamily. CMGC Ser/Thr protein kinase family. CDC2/CDKX subfamily.

It carries out the reaction L-seryl-[protein] + ATP = O-phospho-L-seryl-[protein] + ADP + H(+). The enzyme catalyses L-threonyl-[protein] + ATP = O-phospho-L-threonyl-[protein] + ADP + H(+). This is Serine/threonine-protein kinase CAK1 (CAK1) from Saccharomyces cerevisiae (strain ATCC 204508 / S288c) (Baker's yeast).